A 552-amino-acid polypeptide reads, in one-letter code: Arginine--tRNA ligase (552 aa).

A 'HIGH' region motif is present at residues 130–140 (ANPTGPLSIGH).

It belongs to the class-I aminoacyl-tRNA synthetase family. In terms of assembly, monomer.

The protein resides in the cytoplasm. It catalyses the reaction tRNA(Arg) + L-arginine + ATP = L-arginyl-tRNA(Arg) + AMP + diphosphate. The polypeptide is Arginine--tRNA ligase (Desulfotalea psychrophila (strain LSv54 / DSM 12343)).